A 289-amino-acid chain; its full sequence is B- and T-lymphocyte attenuator (289 aa).

Residues 1 to 30 form the signal peptide; the sequence is MKTLPAMLGTGKLFWVFFLIPYLDIWNIHG. Residues 31–132 form the Ig-like V-type domain; the sequence is KESCDVQLYI…LIESHSTTLY (102 aa). Topologically, residues 31–157 are extracellular; sequence KESCDVQLYI…MASRPWLLYR (127 aa). 3 disulfides stabilise this stretch: cysteine 34/cysteine 63, cysteine 58/cysteine 115, and cysteine 72/cysteine 79. 3 N-linked (GlcNAc...) asparagine glycosylation sites follow: asparagine 75, asparagine 94, and asparagine 110. A helical transmembrane segment spans residues 158–178; that stretch reads LLPLGGLPLLITTCFCLFCCL. At 179–289 the chain is on the cytoplasmic side; the sequence is RRHQGKQNEL…TEYASICVRS (111 aa).

In terms of assembly, interacts with tyrosine phosphatases PTPN6/SHP-1 and PTPN11/SHP-2. Interacts with TNFRSF14/HVEM (via cysteine-rich domain 1). Post-translationally, phosphorylated on Tyr residues by TNFRSF14 and by antigen receptors cross-linking, both inducing association with PTPN6 and PTPN11. N-glycosylated.

Its subcellular location is the cell membrane. Its function is as follows. Inhibitory receptor on lymphocytes that negatively regulates antigen receptor signaling via PTPN6/SHP-1 and PTPN11/SHP-2. May interact in cis (on the same cell) or in trans (on other cells) with TNFRSF14. In cis interactions, appears to play an immune regulatory role inhibiting in trans interactions in naive T cells to maintain a resting state. In trans interactions, can predominate during adaptive immune response to provide survival signals to effector T cells. This chain is B- and T-lymphocyte attenuator, found in Homo sapiens (Human).